The sequence spans 334 residues: AT-hook motif nuclear-localized protein 2 (334 aa).

Low complexity predominate over residues 1–21 (METTGEVVKTTTGSDGGVTVV). Disordered regions lie at residues 1-103 (METT…PTTS) and 109-128 (STTS…PSSF). A compositionally biased stretch (pro residues) spans 44–54 (SVAPPPPPPPQ). Residues 71–80 (IKKRRGRPRK) show a composition bias toward basic residues. Residues 72–80 (KKRRGRPRK) carry the Bipartite nuclear localization signal motif. The segment at residues 72-84 (KKRRGRPRKYGHD) is a DNA-binding region (a.T hook). Over residues 90-103 (LSPNPISSAAPTTS) the composition is skewed to polar residues. The region spanning 147–287 (AANFTPHIIT…PHNHNFMSSP (141 aa)) is the PPC domain. Residues 306-319 (SSLPISTWTPSFPS) show a composition bias toward polar residues. The segment at 306-334 (SSLPISTWTPSFPSDSRHKHSHDFNITLT) is disordered.

The protein resides in the nucleus. In terms of biological role, transcription factor that specifically binds AT-rich DNA sequences related to the nuclear matrix attachment regions (MARs). This chain is AT-hook motif nuclear-localized protein 2, found in Arabidopsis thaliana (Mouse-ear cress).